Here is a 66-residue protein sequence, read N- to C-terminus: Large ribosomal subunit protein bL35 (66 aa).

This sequence belongs to the bacterial ribosomal protein bL35 family.

In Borrelia garinii subsp. bavariensis (strain ATCC BAA-2496 / DSM 23469 / PBi) (Borreliella bavariensis), this protein is Large ribosomal subunit protein bL35.